A 398-amino-acid chain; its full sequence is Phosphoglycerate kinase (398 aa).

Residues 21-23 (DFN), Arg36, 59-62 (HLGR), Arg119, and Arg157 contribute to the substrate site. Residues Lys208, Gly296, Glu327, and 354–357 (GGDS) contribute to the ATP site.

The protein belongs to the phosphoglycerate kinase family. In terms of assembly, monomer.

The protein localises to the cytoplasm. It catalyses the reaction (2R)-3-phosphoglycerate + ATP = (2R)-3-phospho-glyceroyl phosphate + ADP. Its pathway is carbohydrate degradation; glycolysis; pyruvate from D-glyceraldehyde 3-phosphate: step 2/5. The protein is Phosphoglycerate kinase of Streptococcus pyogenes serotype M18 (strain MGAS8232).